An 82-amino-acid chain; its full sequence is Cytochrome b559 subunit alpha (82 aa).

A helical transmembrane segment spans residues 22–36 (VIHAITLPSIFLAGF). His-24 contacts heme.

It belongs to the PsbE/PsbF family. As to quaternary structure, heterodimer of an alpha subunit and a beta subunit. PSII is composed of 1 copy each of membrane proteins PsbA, PsbB, PsbC, PsbD, PsbE, PsbF, PsbH, PsbI, PsbJ, PsbK, PsbL, PsbM, PsbT, PsbX, PsbY, PsbZ, Psb30/Ycf12, peripheral proteins PsbO, CyanoQ (PsbQ), PsbU, PsbV and a large number of cofactors. It forms dimeric complexes. Heme b is required as a cofactor.

Its subcellular location is the cellular thylakoid membrane. Its function is as follows. This b-type cytochrome is tightly associated with the reaction center of photosystem II (PSII). PSII is a light-driven water:plastoquinone oxidoreductase that uses light energy to abstract electrons from H(2)O, generating O(2) and a proton gradient subsequently used for ATP formation. It consists of a core antenna complex that captures photons, and an electron transfer chain that converts photonic excitation into a charge separation. The protein is Cytochrome b559 subunit alpha of Synechococcus sp. (strain CC9311).